Consider the following 545-residue polypeptide: Chaperonin GroEL (545 aa).

Residues 30–33 (TLGP), Lys-51, 87–91 (DGTTT), Gly-415, and Asp-495 contribute to the ATP site.

It belongs to the chaperonin (HSP60) family. In terms of assembly, forms a cylinder of 14 subunits composed of two heptameric rings stacked back-to-back. Interacts with the co-chaperonin GroES.

The protein localises to the cytoplasm. The catalysed reaction is ATP + H2O + a folded polypeptide = ADP + phosphate + an unfolded polypeptide.. In terms of biological role, together with its co-chaperonin GroES, plays an essential role in assisting protein folding. The GroEL-GroES system forms a nano-cage that allows encapsulation of the non-native substrate proteins and provides a physical environment optimized to promote and accelerate protein folding. The chain is Chaperonin GroEL from Shewanella amazonensis (strain ATCC BAA-1098 / SB2B).